The primary structure comprises 255 residues: Small ribosomal subunit protein eS1 (255 aa).

Basic residues predominate over residues 1-18 (MAVGKNKRLSKGKKGLKK). The tract at residues 1-22 (MAVGKNKRLSKGKKGLKKRAQD) is disordered. At Ala-2 the chain carries N-acetylalanine; partial.

This sequence belongs to the eukaryotic ribosomal protein eS1 family. In terms of assembly, component of the small ribosomal subunit. Mature ribosomes consist of a small (40S) and a large (60S) subunit. The 40S subunit contains about 33 different proteins and 1 molecule of RNA (18S). The 60S subunit contains about 49 different proteins and 3 molecules of RNA (25S, 5.8S and 5S).

The protein localises to the cytoplasm. The polypeptide is Small ribosomal subunit protein eS1 (Uncinocarpus reesii (strain UAMH 1704)).